Consider the following 265-residue polypeptide: 3-methyl-2-oxobutanoate hydroxymethyltransferase (265 aa).

Residues Asp-45 and Asp-84 each contribute to the Mg(2+) site. Residues 45-46 (DS), Asp-84, and Lys-114 each bind 3-methyl-2-oxobutanoate. Glu-116 contributes to the Mg(2+) binding site. Glu-183 functions as the Proton acceptor in the catalytic mechanism.

The protein belongs to the PanB family. Homodecamer; pentamer of dimers. The cofactor is Mg(2+).

Its subcellular location is the cytoplasm. It carries out the reaction 3-methyl-2-oxobutanoate + (6R)-5,10-methylene-5,6,7,8-tetrahydrofolate + H2O = 2-dehydropantoate + (6S)-5,6,7,8-tetrahydrofolate. It functions in the pathway cofactor biosynthesis; (R)-pantothenate biosynthesis; (R)-pantoate from 3-methyl-2-oxobutanoate: step 1/2. Functionally, catalyzes the reversible reaction in which hydroxymethyl group from 5,10-methylenetetrahydrofolate is transferred onto alpha-ketoisovalerate to form ketopantoate. This Salinibacter ruber (strain DSM 13855 / M31) protein is 3-methyl-2-oxobutanoate hydroxymethyltransferase.